The primary structure comprises 102 residues: NADH-quinone oxidoreductase subunit K (102 aa).

The next 3 membrane-spanning stretches (helical) occupy residues 5-25 (LGHF…GIFL), 31-51 (IVLL…FVAF), and 62-82 (IFVF…LALL).

Belongs to the complex I subunit 4L family. NDH-1 is composed of 14 different subunits. Subunits NuoA, H, J, K, L, M, N constitute the membrane sector of the complex.

It localises to the cell inner membrane. It catalyses the reaction a quinone + NADH + 5 H(+)(in) = a quinol + NAD(+) + 4 H(+)(out). In terms of biological role, NDH-1 shuttles electrons from NADH, via FMN and iron-sulfur (Fe-S) centers, to quinones in the respiratory chain. The immediate electron acceptor for the enzyme in this species is believed to be ubiquinone. Couples the redox reaction to proton translocation (for every two electrons transferred, four hydrogen ions are translocated across the cytoplasmic membrane), and thus conserves the redox energy in a proton gradient. The chain is NADH-quinone oxidoreductase subunit K from Variovorax paradoxus (strain S110).